Reading from the N-terminus, the 176-residue chain is Glutamyl-tRNA(Gln) amidotransferase subunit F, mitochondrial (176 aa).

It belongs to the GatF family. Subunit of the heterotrimeric GatFAB amidotransferase (AdT) complex, composed of A, B and F subunits.

It is found in the mitochondrion inner membrane. The catalysed reaction is L-glutamyl-tRNA(Gln) + L-glutamine + ATP + H2O = L-glutaminyl-tRNA(Gln) + L-glutamate + ADP + phosphate + H(+). Its function is as follows. Allows the formation of correctly charged Gln-tRNA(Gln) through the transamidation of misacylated Glu-tRNA(Gln) in the mitochondria. The reaction takes place in the presence of glutamine and ATP through an activated gamma-phospho-Glu-tRNA(Gln). Required for proper protein synthesis within the mitochondrion. The chain is Glutamyl-tRNA(Gln) amidotransferase subunit F, mitochondrial from Yarrowia lipolytica (strain CLIB 122 / E 150) (Yeast).